The sequence spans 189 residues: GTP cyclohydrolase 1 (189 aa).

Residues cysteine 79, histidine 82, and cysteine 151 each contribute to the Zn(2+) site.

The protein belongs to the GTP cyclohydrolase I family. As to quaternary structure, toroid-shaped homodecamer, composed of two pentamers of five dimers.

It carries out the reaction GTP + H2O = 7,8-dihydroneopterin 3'-triphosphate + formate + H(+). It participates in cofactor biosynthesis; 7,8-dihydroneopterin triphosphate biosynthesis; 7,8-dihydroneopterin triphosphate from GTP: step 1/1. This chain is GTP cyclohydrolase 1, found in Lactiplantibacillus plantarum (strain ATCC BAA-793 / NCIMB 8826 / WCFS1) (Lactobacillus plantarum).